The sequence spans 466 residues: Neuraminidase (466 aa).

The Intravirion segment spans residues 1–8; sequence MLPSTVQT. The helical transmembrane segment at 9 to 31 threads the bilayer; sequence LTLLLTSGGVLLSLYVSASLSYL. The involved in apical transport and lipid raft association stretch occupies residues 13-35; the sequence is LTSGGVLLSLYVSASLSYLLYSD. Residues 32-466 lie on the Virion surface side of the membrane; sequence LYSDVLLKFS…DTVTGVDMAL (435 aa). A hypervariable stalk region region spans residues 38–86; it reads LKFSSTKTTAPTMSLECTNASNAQTVNHSATKEMTFPPPEPEWTYPRLS. N56 and N64 each carry an N-linked (GlcNAc...) asparagine; by host glycan. 8 cysteine pairs are disulfide-bonded: C87–C420, C122–C127, C182–C229, C231–C236, C277–C291, C279–C289, C318–C337, and C424–C447. The interval 89–466 is head of neuraminidase; sequence GSTFQKALLI…DTVTGVDMAL (378 aa). Residue R116 participates in substrate binding. Residue N144 is glycosylated (N-linked (GlcNAc...) asparagine; by host). D149 acts as the Proton donor/acceptor in catalysis. Substrate is bound at residue R150. A substrate-binding site is contributed by 275 to 276; the sequence is EE. N-linked (GlcNAc...) asparagine; by host glycosylation occurs at N284. Substrate is bound at residue R292. The Ca(2+) site is built by D293, T297, D324, and G346. R374 serves as a coordination point for substrate. Residue Y409 is the Nucleophile of the active site.

It belongs to the glycosyl hydrolase 34 family. Homotetramer. Ca(2+) serves as cofactor. N-glycosylated.

Its subcellular location is the virion membrane. The protein resides in the host apical cell membrane. It carries out the reaction Hydrolysis of alpha-(2-&gt;3)-, alpha-(2-&gt;6)-, alpha-(2-&gt;8)- glycosidic linkages of terminal sialic acid residues in oligosaccharides, glycoproteins, glycolipids, colominic acid and synthetic substrates.. Its activity is regulated as follows. Inhibited by the neuraminidase inhibitors zanamivir (Relenza) and oseltamivir (Tamiflu). These drugs interfere with the release of progeny virus from infected cells and are effective against all influenza strains. Resistance to neuraminidase inhibitors is quite rare. In terms of biological role, catalyzes the removal of terminal sialic acid residues from viral and cellular glycoconjugates. Cleaves off the terminal sialic acids on the glycosylated HA during virus budding to facilitate virus release. Additionally helps virus spread through the circulation by further removing sialic acids from the cell surface. These cleavages prevent self-aggregation and ensure the efficient spread of the progeny virus from cell to cell. Otherwise, infection would be limited to one round of replication. Described as a receptor-destroying enzyme because it cleaves a terminal sialic acid from the cellular receptors. May facilitate viral invasion of the upper airways by cleaving the sialic acid moieties on the mucin of the airway epithelial cells. Likely to plays a role in the budding process through its association with lipid rafts during intracellular transport. May additionally display a raft-association independent effect on budding. Plays a role in the determination of host range restriction on replication and virulence. Sialidase activity in late endosome/lysosome traffic seems to enhance virus replication. The sequence is that of Neuraminidase from Influenza B virus (strain B/Lee/1940).